We begin with the raw amino-acid sequence, 586 residues long: Phosphomethylpyrimidine synthase (586 aa).

Residues 1–59 (MKQSVSAEQIELKSSLPGSKKVYVDGPREGMKVPMREIEQSETNGVPNPPIRVYDTSGP) are disordered. The segment covering 22 to 39 (VYVDGPREGMKVPMREIE) has biased composition (basic and acidic residues). Residues Asn193, Met222, Tyr251, His287, 307 to 309 (SRG), 348 to 351 (DGLR), and Glu387 contribute to the substrate site. His391 lines the Zn(2+) pocket. Tyr414 is a substrate binding site. His455 is a Zn(2+) binding site. Cys535, Cys538, and Cys543 together coordinate [4Fe-4S] cluster.

The protein belongs to the ThiC family. The cofactor is [4Fe-4S] cluster.

The catalysed reaction is 5-amino-1-(5-phospho-beta-D-ribosyl)imidazole + S-adenosyl-L-methionine = 4-amino-2-methyl-5-(phosphooxymethyl)pyrimidine + CO + 5'-deoxyadenosine + formate + L-methionine + 3 H(+). Its pathway is cofactor biosynthesis; thiamine diphosphate biosynthesis. In terms of biological role, catalyzes the synthesis of the hydroxymethylpyrimidine phosphate (HMP-P) moiety of thiamine from aminoimidazole ribotide (AIR) in a radical S-adenosyl-L-methionine (SAM)-dependent reaction. This is Phosphomethylpyrimidine synthase from Bacillus cereus (strain ATCC 14579 / DSM 31 / CCUG 7414 / JCM 2152 / NBRC 15305 / NCIMB 9373 / NCTC 2599 / NRRL B-3711).